Reading from the N-terminus, the 174-residue chain is Adipose-secreted signaling protein (174 aa).

Ala2 bears the N-acetylalanine mark. Position 147 is a phosphothreonine (Thr147).

Belongs to the ADISSP family.

Its subcellular location is the secreted. Adipocyte-secreted protein (adipokine) that acts as a key regulator for white adipose tissue (WAT) thermogenesis and glucose homeostasis at least in part through activation of protein kinase A (PKA). The polypeptide is Adipose-secreted signaling protein (Rattus norvegicus (Rat)).